The following is a 469-amino-acid chain: DNA-binding transcriptional regulator NtrC (469 aa).

Residues 5–119 enclose the Response regulatory domain; that stretch reads IVWVVDDDSS…EAVALVERAI (115 aa). Position 54 is a 4-aspartylphosphate (aspartate 54). The 230-residue stretch at 140–369 folds into the Sigma-54 factor interaction domain; it reads IIGEAPAMQD…LENTCRWLTV (230 aa). ATP contacts are provided by residues 168 to 175 and 231 to 240; these read GESGTGKE and ADGGTLFLDE. The segment at residues 445 to 464 is a DNA-binding region (H-T-H motif); the sequence is KQEAARLLGWGRNTLTRKLK.

Post-translationally, phosphorylated and dephosphorylated by NtrB.

The protein resides in the cytoplasm. In terms of biological role, member of the two-component regulatory system NtrB/NtrC, which controls expression of the nitrogen-regulated (ntr) genes in response to nitrogen limitation. Phosphorylated NtrC binds directly to DNA and stimulates the formation of open promoter-sigma54-RNA polymerase complexes. This chain is DNA-binding transcriptional regulator NtrC (glnG), found in Escherichia coli O157:H7.